A 209-amino-acid chain; its full sequence is Small ribosomal subunit protein uS4 (209 aa).

The S4 RNA-binding domain occupies 98 to 164 (SRLDNVVYRG…TPFIVARETA (67 aa)).

The protein belongs to the universal ribosomal protein uS4 family. In terms of assembly, part of the 30S ribosomal subunit. Contacts protein S5. The interaction surface between S4 and S5 is involved in control of translational fidelity.

Functionally, one of the primary rRNA binding proteins, it binds directly to 16S rRNA where it nucleates assembly of the body of the 30S subunit. With S5 and S12 plays an important role in translational accuracy. This Frankia casuarinae (strain DSM 45818 / CECT 9043 / HFP020203 / CcI3) protein is Small ribosomal subunit protein uS4.